The following is a 352-amino-acid chain: Fe(3+) ions import ATP-binding protein FbpC 1 (352 aa).

The 231-residue stretch at 11 to 241 (VELKHITKRF…PASRFMASFM (231 aa)) folds into the ABC transporter domain. 43 to 50 (GPSGCGKT) serves as a coordination point for ATP.

The protein belongs to the ABC transporter superfamily. Fe(3+) ion importer (TC 3.A.1.10) family. The complex is composed of two ATP-binding proteins (FbpC), two transmembrane proteins (FbpB) and a solute-binding protein (FbpA).

It localises to the cell inner membrane. It carries out the reaction Fe(3+)(out) + ATP + H2O = Fe(3+)(in) + ADP + phosphate + H(+). In terms of biological role, part of the ABC transporter complex FbpABC involved in Fe(3+) ions import. Responsible for energy coupling to the transport system. This is Fe(3+) ions import ATP-binding protein FbpC 1 from Pectobacterium atrosepticum (strain SCRI 1043 / ATCC BAA-672) (Erwinia carotovora subsp. atroseptica).